The following is a 265-amino-acid chain: Indole-3-glycerol phosphate synthase (265 aa).

The protein belongs to the TrpC family.

It carries out the reaction 1-(2-carboxyphenylamino)-1-deoxy-D-ribulose 5-phosphate + H(+) = (1S,2R)-1-C-(indol-3-yl)glycerol 3-phosphate + CO2 + H2O. Its pathway is amino-acid biosynthesis; L-tryptophan biosynthesis; L-tryptophan from chorismate: step 4/5. The protein is Indole-3-glycerol phosphate synthase of Desulforamulus reducens (strain ATCC BAA-1160 / DSM 100696 / MI-1) (Desulfotomaculum reducens).